The primary structure comprises 262 residues: Acyl-[acyl-carrier-protein]--UDP-N-acetylglucosamine O-acyltransferase (262 aa).

Belongs to the transferase hexapeptide repeat family. LpxA subfamily. In terms of assembly, homotrimer.

Its subcellular location is the cytoplasm. The enzyme catalyses a (3R)-hydroxyacyl-[ACP] + UDP-N-acetyl-alpha-D-glucosamine = a UDP-3-O-[(3R)-3-hydroxyacyl]-N-acetyl-alpha-D-glucosamine + holo-[ACP]. It functions in the pathway glycolipid biosynthesis; lipid IV(A) biosynthesis; lipid IV(A) from (3R)-3-hydroxytetradecanoyl-[acyl-carrier-protein] and UDP-N-acetyl-alpha-D-glucosamine: step 1/6. Its function is as follows. Involved in the biosynthesis of lipid A, a phosphorylated glycolipid that anchors the lipopolysaccharide to the outer membrane of the cell. This chain is Acyl-[acyl-carrier-protein]--UDP-N-acetylglucosamine O-acyltransferase, found in Photorhabdus laumondii subsp. laumondii (strain DSM 15139 / CIP 105565 / TT01) (Photorhabdus luminescens subsp. laumondii).